The following is a 100-amino-acid chain: MDLTPREKDKLLLFTAALVAERRKARGLKLNHPEAIALISAAILEGARDGRTVAELMNYGRTILTRDEVMDGIPEMIPDVQIEATFPDGTKLVTVHQPII.

It belongs to the urease gamma subunit family. Heterotrimer of UreA (gamma), UreB (beta) and UreC (alpha) subunits. Three heterotrimers associate to form the active enzyme.

The protein localises to the cytoplasm. It catalyses the reaction urea + 2 H2O + H(+) = hydrogencarbonate + 2 NH4(+). The protein operates within nitrogen metabolism; urea degradation; CO(2) and NH(3) from urea (urease route): step 1/1. The polypeptide is Urease subunit gamma (Tolumonas auensis (strain DSM 9187 / NBRC 110442 / TA 4)).